Here is an 856-residue protein sequence, read N- to C-terminus: Envelope glycoprotein gp150 (856 aa).

The Extracellular portion of the chain corresponds to 1–785; sequence MAEGFVANGQ…WIGNIPQYLK (785 aa). Asparagine 220, asparagine 258, asparagine 269, asparagine 274, asparagine 298, asparagine 330, asparagine 336, asparagine 342, asparagine 418, asparagine 422, asparagine 448, asparagine 469, asparagine 481, asparagine 499, asparagine 518, asparagine 531, asparagine 548, asparagine 551, and asparagine 556 each carry an N-linked (GlcNAc...) asparagine; by host glycan. Residues 616-636 form a fusion peptide region; the sequence is VMLALATVLSMAGAGTGATAI. Positions 643 to 693 form a coiled coil; that stretch reads HQVLATQQEAIEKVTEALKITNLRLVTLEHQVLVIGLKVEAMEKFLYTAFA. The interval 662–680 is immunosuppression; that stretch reads ITNLRLVTLEHQVLVIGLK. N-linked (GlcNAc...) asparagine; by host glycans are attached at residues asparagine 717, asparagine 721, asparagine 729, and asparagine 737. Residues 736–772 are a coiled coil; that stretch reads YNQTKDLQKKFYGIIMDIEQNNVQGKKGLQQLQKWED. The chain crosses the membrane as a helical span at residues 786–806; the sequence is GLLGSIVGIGLGILLLILCLP. Residues 807-856 lie on the Cytoplasmic side of the membrane; that stretch reads TLVDCIRNCIHKILGYTVIAMPEVDGEEIQPQMELRRNGRQCGMSEKEEE.

The mature envelope protein (Env) consists of a trimer of SU-TM heterodimers attached by noncovalent interactions or by a labile interchain disulfide bond. Post-translationally, specific enzymatic cleavages in vivo yield mature proteins. Envelope glycoproteins are synthesized as an inactive precursor that is N-glycosylated and processed likely by host cell furin or by a furin-like protease in the Golgi to yield the mature SU and TM proteins. The cleavage site between SU and TM requires the minimal sequence [KR]-X-[KR]-R.

The protein resides in the virion membrane. It is found in the host cell membrane. The surface protein (SU) attaches the virus to the host cell by binding to its receptor. This interaction triggers the refolding of the transmembrane protein (TM) and is thought to activate its fusogenic potential by unmasking its fusion peptide. Fusion occurs at the host cell plasma membrane. Functionally, the transmembrane protein (TM) acts as a class I viral fusion protein. Under the current model, the protein has at least 3 conformational states: pre-fusion native state, pre-hairpin intermediate state, and post-fusion hairpin state. During viral and target cell membrane fusion, the coiled coil regions (heptad repeats) assume a trimer-of-hairpins structure, positioning the fusion peptide in close proximity to the C-terminal region of the ectodomain. The formation of this structure appears to drive apposition and subsequent fusion of viral and target cell membranes. Membranes fusion leads to delivery of the nucleocapsid into the cytoplasm. The sequence is that of Envelope glycoprotein gp150 (env) from Feline immunodeficiency virus (strain UT-113) (FIV).